Reading from the N-terminus, the 37-residue chain is MIEPLLCGIVLGLIPVTLLGLFVAAWNQYRRGSALGG.

Residues leucine 5–alanine 25 form a helical membrane-spanning segment.

It belongs to the PetG family. As to quaternary structure, the 4 large subunits of the cytochrome b6-f complex are cytochrome b6, subunit IV (17 kDa polypeptide, PetD), cytochrome f and the Rieske protein, while the 4 small subunits are PetG, PetL, PetM and PetN. The complex functions as a dimer.

The protein resides in the cellular thylakoid membrane. Functionally, component of the cytochrome b6-f complex, which mediates electron transfer between photosystem II (PSII) and photosystem I (PSI), cyclic electron flow around PSI, and state transitions. PetG is required for either the stability or assembly of the cytochrome b6-f complex. The sequence is that of Cytochrome b6-f complex subunit 5 from Synechococcus sp. (strain WH7803).